We begin with the raw amino-acid sequence, 385 residues long: Calcium/calmodulin-dependent protein kinase type 1D (385 aa).

The region spanning 23–279 is the Protein kinase domain; the sequence is FEFKETLGTG…CEQAARHPWI (257 aa). ATP contacts are provided by residues 29–37 and K52; that span reads LGTGAFSEV. K113 is covalently cross-linked (Glycyl lysine isopeptide (Lys-Gly) (interchain with G-Cter in SUMO2)). S122 bears the Phosphoserine mark. D144 (proton acceptor) is an active-site residue. A Phosphothreonine; by CaMKK1 and CaMKK2 modification is found at T180. The autoinhibitory domain stretch occupies residues 279-319; the sequence is IAGDTALNKNIHESVSAQIRKNFAKSKWRQAFNATAVVRHM. The tract at residues 299-320 is calmodulin-binding; that stretch reads KNFAKSKWRQAFNATAVVRHMR. A Nuclear export signal motif is present at residues 318–324; sequence HMRKLHL. Residues 360–385 form a disordered region; sequence SSGVSGVGAERRPRPTTVTAVHSGSK. Residues 375 to 385 are compositionally biased toward polar residues; the sequence is TTVTAVHSGSK.

This sequence belongs to the protein kinase superfamily. CAMK Ser/Thr protein kinase family. CaMK subfamily. Widely expressed. Highly and mostly expressed in polymorphonuclear leukocytes (neutrophilic and eosinophilic granulocytes) while little or no expression is observed in monocytes and lymphocytes.

The protein localises to the cytoplasm. It localises to the nucleus. It carries out the reaction L-seryl-[protein] + ATP = O-phospho-L-seryl-[protein] + ADP + H(+). The catalysed reaction is L-threonyl-[protein] + ATP = O-phospho-L-threonyl-[protein] + ADP + H(+). Its activity is regulated as follows. Activated by Ca(2+)/calmodulin. Binding of calmodulin results in conformational change that relieves intrasteric autoinhibition and allows phosphorylation of Thr-180 within the activation loop by CaMKK1 or CaMKK2. Phosphorylation of Thr-180 results in several fold increase in total activity. Unlike CaMK4, may be unable to exhibit autonomous activity after Ca(2+)/calmodulin activation. Functionally, calcium/calmodulin-dependent protein kinase that operates in the calcium-triggered CaMKK-CaMK1 signaling cascade and, upon calcium influx, activates CREB-dependent gene transcription, regulates calcium-mediated granulocyte function and respiratory burst and promotes basal dendritic growth of hippocampal neurons. In neutrophil cells, required for cytokine-induced proliferative responses and activation of the respiratory burst. Activates the transcription factor CREB1 in hippocampal neuron nuclei. May play a role in apoptosis of erythroleukemia cells. In vitro, phosphorylates transcription factor CREM isoform Beta. The protein is Calcium/calmodulin-dependent protein kinase type 1D (CAMK1D) of Homo sapiens (Human).